The following is a 335-amino-acid chain: Holliday junction branch migration complex subunit RuvB (335 aa).

The segment at 4–184 (ADRIISGQAK…FGIVQRLEFY (181 aa)) is large ATPase domain (RuvB-L). ATP-binding positions include Ile-23, Arg-24, Gly-65, Lys-68, Thr-69, Thr-70, 131–133 (EDY), Arg-174, Tyr-184, and Arg-221. Residue Thr-69 coordinates Mg(2+). The tract at residues 185 to 255 (SVEDLTSIVA…VAKQALSMLD (71 aa)) is small ATPAse domain (RuvB-S). The segment at 258–335 (DAGFDYLDRK…RHFGLQKLSD (78 aa)) is head domain (RuvB-H). The DNA site is built by Arg-294, Arg-313, and Arg-318.

Belongs to the RuvB family. Homohexamer. Forms an RuvA(8)-RuvB(12)-Holliday junction (HJ) complex. HJ DNA is sandwiched between 2 RuvA tetramers; dsDNA enters through RuvA and exits via RuvB. An RuvB hexamer assembles on each DNA strand where it exits the tetramer. Each RuvB hexamer is contacted by two RuvA subunits (via domain III) on 2 adjacent RuvB subunits; this complex drives branch migration. In the full resolvosome a probable DNA-RuvA(4)-RuvB(12)-RuvC(2) complex forms which resolves the HJ.

The protein resides in the cytoplasm. It catalyses the reaction ATP + H2O = ADP + phosphate + H(+). Its function is as follows. The RuvA-RuvB-RuvC complex processes Holliday junction (HJ) DNA during genetic recombination and DNA repair, while the RuvA-RuvB complex plays an important role in the rescue of blocked DNA replication forks via replication fork reversal (RFR). RuvA specifically binds to HJ cruciform DNA, conferring on it an open structure. The RuvB hexamer acts as an ATP-dependent pump, pulling dsDNA into and through the RuvAB complex. RuvB forms 2 homohexamers on either side of HJ DNA bound by 1 or 2 RuvA tetramers; 4 subunits per hexamer contact DNA at a time. Coordinated motions by a converter formed by DNA-disengaged RuvB subunits stimulates ATP hydrolysis and nucleotide exchange. Immobilization of the converter enables RuvB to convert the ATP-contained energy into a lever motion, pulling 2 nucleotides of DNA out of the RuvA tetramer per ATP hydrolyzed, thus driving DNA branch migration. The RuvB motors rotate together with the DNA substrate, which together with the progressing nucleotide cycle form the mechanistic basis for DNA recombination by continuous HJ branch migration. Branch migration allows RuvC to scan DNA until it finds its consensus sequence, where it cleaves and resolves cruciform DNA. The sequence is that of Holliday junction branch migration complex subunit RuvB from Haemophilus influenzae (strain PittEE).